A 318-amino-acid chain; its full sequence is Peroxisomal adenine nucleotide carrier 1 (318 aa).

3 Solcar repeats span residues 5–94, 104–184, and 202–296; these read LESL…FKRL, IGTK…LKQR, and LSAF…ISAS. Helical transmembrane passes span 8-28, 104-124, 158-178, 201-221, 252-272, and 284-304; these read LAEA…LYPL, IGTK…AIAT, FDGL…YTVF, SLSA…ATCL, VLSV…FKGL, and ALLL…ILAL.

The protein belongs to the mitochondrial carrier (TC 2.A.29) family.

It is found in the peroxisome membrane. Peroxisomal adenine nucleotide transporter catalyzing the counterexchange of ATP with AMP. ATP is needed by reactions that generate acyl-CoA for peroxisomal fatty acid beta-oxidation during postgerminative growth. Required for the conversion of seed-reserved triacylglycerols into sucrose that is necessary for growth before the onset of photosynthesis. The protein is Peroxisomal adenine nucleotide carrier 1 (PNC1) of Glycine max (Soybean).